The chain runs to 577 residues: Lysine-specific demethylase 7B (577 aa).

The PHD-type zinc finger occupies 5-56 (QLYCVCRQPYDVSRFMIECDICKDWFHGSCVEVEEHYAVDIDVYHCPNCDVH). The 157-residue stretch at 198-354 (FSDTKMAELV…MQLRCYEMER (157 aa)) folds into the JmjC domain. Residue Thr247 participates in substrate binding. Fe cation contacts are provided by His250 and Asp252. Position 267 (Lys267) interacts with substrate. His322 contacts Fe cation. Positions 460–513 (CPSTRSAHERGSHARKTARRLRGHHHHHHRHHHHHHHHHHHNHQHSDGPKAPSH) are disordered. Basic residues predominate over residues 472–502 (HARKTARRLRGHHHHHHRHHHHHHHHHHHNH).

Belongs to the JHDM1 histone demethylase family. JHDM1D subfamily. Fe(2+) serves as cofactor. As to expression, predominantly expressed in brain.

It is found in the nucleus. In terms of biological role, histone demethylase required for brain development. Specifically demethylates dimethylated 'Lys-9' and 'Lys-27' (H3K9me2 and H3K27me2, respectively) of histone H3 and monomethylated histone H4 'Lys-20' residue (H4K20Me1), thereby playing a central role in histone code. The sequence is that of Lysine-specific demethylase 7B (jhdm1db) from Danio rerio (Zebrafish).